Reading from the N-terminus, the 258-residue chain is Regulatory protein RecX (258 aa).

The protein belongs to the RecX family.

It is found in the cytoplasm. In terms of biological role, modulates RecA activity. This is Regulatory protein RecX from Streptococcus pneumoniae (strain P1031).